Here is a 212-residue protein sequence, read N- to C-terminus: Golgi SNAP receptor complex member 2 (212 aa).

Residue M1 is modified to N-acetylmethionine. Over 1–190 the chain is Cytoplasmic; that stretch reads MEPLYQQTHK…LIEKRAFQDK (190 aa). A coiled-coil region spans residues 61-107; the sequence is NRRQNAKLRVDQLKYDVQHLQTALRNFQHRRQAKEQQERQRDELLSR. Positions 118-120 match the IxM motif; signal for cargo packaging into COPII-coated vesicles motif; it reads IPM. Residues 191–211 traverse the membrane as a helical; Anchor for type IV membrane protein segment; that stretch reads YFMIGGMLLTCAVMFLVVQYL. T212 is a topological domain (vesicular).

This sequence belongs to the GOSR2 family. In terms of assembly, part of a unique SNARE complex composed of the Golgi SNAREs GOSR1, STX5 and YKT6. Interacts with BET1.

The protein resides in the golgi apparatus. Its subcellular location is the cis-Golgi network membrane. The protein localises to the golgi apparatus membrane. It is found in the endoplasmic reticulum membrane. Its function is as follows. Involved in transport of proteins from the cis/medial-Golgi to the trans-Golgi network. The chain is Golgi SNAP receptor complex member 2 (Gosr2) from Rattus norvegicus (Rat).